The sequence spans 305 residues: UDP-3-O-acyl-N-acetylglucosamine deacetylase (305 aa).

Zn(2+)-binding residues include histidine 79, histidine 238, and aspartate 242. Catalysis depends on histidine 265, which acts as the Proton donor.

The protein belongs to the LpxC family. The cofactor is Zn(2+).

It carries out the reaction a UDP-3-O-[(3R)-3-hydroxyacyl]-N-acetyl-alpha-D-glucosamine + H2O = a UDP-3-O-[(3R)-3-hydroxyacyl]-alpha-D-glucosamine + acetate. Its pathway is glycolipid biosynthesis; lipid IV(A) biosynthesis; lipid IV(A) from (3R)-3-hydroxytetradecanoyl-[acyl-carrier-protein] and UDP-N-acetyl-alpha-D-glucosamine: step 2/6. Its function is as follows. Catalyzes the hydrolysis of UDP-3-O-myristoyl-N-acetylglucosamine to form UDP-3-O-myristoylglucosamine and acetate, the committed step in lipid A biosynthesis. In Cronobacter sakazakii (strain ATCC BAA-894) (Enterobacter sakazakii), this protein is UDP-3-O-acyl-N-acetylglucosamine deacetylase.